A 245-amino-acid polypeptide reads, in one-letter code: Carbohydrate deacetylase (245 aa).

Histidine 59 and histidine 125 together coordinate Mg(2+).

Belongs to the YdjC deacetylase family. Homodimer. Mg(2+) is required as a cofactor.

Probably catalyzes the deacetylation of acetylated carbohydrates an important step in the degradation of oligosaccharides. The protein is Carbohydrate deacetylase of Listeria monocytogenes serotype 4b (strain CLIP80459).